Here is a 61-residue protein sequence, read N- to C-terminus: Small ribosomal subunit protein uS14 (61 aa).

Residues Cys-24, Cys-27, Cys-40, and Cys-43 each contribute to the Zn(2+) site.

It belongs to the universal ribosomal protein uS14 family. Zinc-binding uS14 subfamily. In terms of assembly, part of the 30S ribosomal subunit. Contacts proteins S3 and S10. It depends on Zn(2+) as a cofactor.

Functionally, binds 16S rRNA, required for the assembly of 30S particles and may also be responsible for determining the conformation of the 16S rRNA at the A site. In Thermosipho africanus (strain TCF52B), this protein is Small ribosomal subunit protein uS14.